A 1032-amino-acid chain; its full sequence is Exo-beta-D-glucosaminidase (1032 aa).

A signal peptide spans 1–32 (MSFRQKRTRIPLLAMTVTALAAAVCGVTTAPA). Residues 33-46 (ATGAEVAVPLSVGA) constitute a propeptide that is removed on maturation. The active-site Proton donor is Asp-469. Catalysis depends on Glu-541, which acts as the Nucleophile. The tract at residues 883-908 (SVRISGWNTGTQTVPADGSGPGPSDP) is disordered. The region spanning 909 to 1032 (VDYQAEDATI…GGPNVDKITL (124 aa)) is the CBM6 domain.

The protein belongs to the glycosyl hydrolase 2 family. As to quaternary structure, monomer.

The protein resides in the secreted. It carries out the reaction Hydrolysis of chitosan or chitosan oligosaccharides to remove successive D-glucosamine residues from the non-reducing termini.. Hydrolyzes chitosan and chitooligosaccharides with retention of anomeric configuration. Has maximum activity on chitotetraose, chitopentaose and their corresponding alcohols, with a slight decrease in the rate of hydrolysis on longer chains. Has no activity against beta-D-glucopyranoside, beta-D-xylopyranoside, beta-D-mannoside, beta-D-glucuronide, beta-D-galactoside, beta-D-N-acetylgalactosamide, beta-D-N-acetylglucosaminide and alpha-D-N-acetylglucosaminide. In Amycolatopsis orientalis (Nocardia orientalis), this protein is Exo-beta-D-glucosaminidase.